A 100-amino-acid polypeptide reads, in one-letter code: NAD(P)H-quinone oxidoreductase subunit 4L, chloroplastic (100 aa).

A run of 3 helical transmembrane segments spans residues 1-21 (MLEN…YGLT), 30-50 (LMCL…FSSF), and 60-80 (VFAI…LAII).

It belongs to the complex I subunit 4L family. As to quaternary structure, NDH is composed of at least 16 different subunits, 5 of which are encoded in the nucleus.

Its subcellular location is the plastid. It localises to the chloroplast thylakoid membrane. The catalysed reaction is a plastoquinone + NADH + (n+1) H(+)(in) = a plastoquinol + NAD(+) + n H(+)(out). The enzyme catalyses a plastoquinone + NADPH + (n+1) H(+)(in) = a plastoquinol + NADP(+) + n H(+)(out). NDH shuttles electrons from NAD(P)H:plastoquinone, via FMN and iron-sulfur (Fe-S) centers, to quinones in the photosynthetic chain and possibly in a chloroplast respiratory chain. The immediate electron acceptor for the enzyme in this species is believed to be plastoquinone. Couples the redox reaction to proton translocation, and thus conserves the redox energy in a proton gradient. The protein is NAD(P)H-quinone oxidoreductase subunit 4L, chloroplastic of Staurastrum punctulatum (Green alga).